A 312-amino-acid polypeptide reads, in one-letter code: MLAEQFTDKNKHAEQELSPGSSAVTGARNWRASLTLNLTKESNRTILKQAAHQGPLRVQRPFYPEGAQRPHIYILHPPGGLVCGDEIEIDAKLEHGAEALLTTPSAGKIYRTDAAGHRQCQTVRLNCADAQSLEWLPQENIIYDGAEGAQTLLLETSAASRFIAWEITALGRPAADAPFASGAFTQTTRILRDSAPCFFERVALRGEGPGFQEPWGLQGQQVYGSLLAGYVQDSPQKRLQQCREALQANTAIAALGDSKDLRWTLTRKDDLIILRALCQQSEPIKRLFMAAWSLLRPALIGVESHPPRIWAT.

Basic and acidic residues predominate over residues 1 to 15; it reads MLAEQFTDKNKHAEQ. A disordered region spans residues 1 to 24; the sequence is MLAEQFTDKNKHAEQELSPGSSAV.

This sequence belongs to the UreD family. As to quaternary structure, ureD, UreF and UreG form a complex that acts as a GTP-hydrolysis-dependent molecular chaperone, activating the urease apoprotein by helping to assemble the nickel containing metallocenter of UreC. The UreE protein probably delivers the nickel.

It is found in the cytoplasm. Required for maturation of urease via the functional incorporation of the urease nickel metallocenter. The sequence is that of Urease accessory protein UreD from Hahella chejuensis (strain KCTC 2396).